We begin with the raw amino-acid sequence, 186 residues long: Elongation factor P (186 aa).

The protein belongs to the elongation factor P family.

Its subcellular location is the cytoplasm. The protein operates within protein biosynthesis; polypeptide chain elongation. Its function is as follows. Involved in peptide bond synthesis. Stimulates efficient translation and peptide-bond synthesis on native or reconstituted 70S ribosomes in vitro. Probably functions indirectly by altering the affinity of the ribosome for aminoacyl-tRNA, thus increasing their reactivity as acceptors for peptidyl transferase. This Streptococcus gordonii (strain Challis / ATCC 35105 / BCRC 15272 / CH1 / DL1 / V288) protein is Elongation factor P.